The sequence spans 993 residues: Signal peptide, CUB and EGF-like domain-containing protein 3 (993 aa).

Positions 1-20 (MGSGRVPGLCLLVLLVHARA) are cleaved as a signal peptide. The EGF-like 1; calcium-binding domain maps to 29-69 (DVDECVEGTDNCHIDAICQNTPRSYKCICKSGYTGDGKHCK). Disulfide bonds link Cys-33–Cys-46, Cys-40–Cys-55, Cys-57–Cys-68, Cys-74–Cys-86, Cys-82–Cys-95, Cys-97–Cys-110, Cys-116–Cys-127, Cys-123–Cys-136, Cys-161–Cys-172, Cys-168–Cys-182, Cys-184–Cys-197, Cys-201–Cys-212, Cys-208–Cys-221, Cys-223–Cys-236, Cys-240–Cys-251, Cys-247–Cys-260, Cys-262–Cys-275, Cys-281–Cys-292, Cys-288–Cys-301, Cys-303–Cys-316, Cys-322–Cys-332, Cys-328–Cys-341, Cys-343–Cys-355, Cys-361–Cys-372, Cys-368–Cys-381, and Cys-383–Cys-397. Residues 70–111 (DVDECEREDNAGCVHDCVNIPGNYRCTCYDGFHLAHDGHNCL) form the EGF-like 2; calcium-binding domain. The region spanning 112–148 (DVDECAEGNGGCQQSCVNMMGSYECHCREGFFLSDNQ) is the EGF-like 3; calcium-binding domain. EGF-like domains follow at residues 157–198 (EGMN…RDCK), 199–237 (LTCNYGNGGCQHTCDDTEQGPRCGCHIKFVLHTDGKTCI), and 238–276 (ETCAVNNGGCDSKCHDAATGVHCTCPVGFMLQPDRKTCK). Residues 277 to 317 (DIDECRLNNGGCDHICRNTVGSFECSCKKGYKLLINERNCQ) form the EGF-like 7; calcium-binding domain. The EGF-like 8; calcium-binding domain occupies 318–356 (DIDECSFDRTCDHICVNTPGSFQCLCHRGYLLYGITHCG). The EGF-like 9; calcium-binding domain maps to 357–398 (DVDECSINRGGCRFGCINTPGSYQCTCPAGQGRLHWNGKDCT). N-linked (GlcNAc...) asparagine glycosylation is found at Asn-417, Asn-464, Asn-685, Asn-756, and Asn-785. Intrachain disulfides connect Cys-804/Cys-830 and Cys-857/Cys-878. The CUB domain occupies 804–916 (CGGELGEFTG…RGFQIPYVTY (113 aa)).

As to quaternary structure, forms homooligomers. Forms heterooligomers with SCUBE1 and SCUBE2. Interacts with TGFBR2 through the CUB domain; this interaction does not affect TGFB1-binding to TGFBR2. Interacts with BMP2, BMP4 and BMP7; the interaction is mediated by the CUB domain. Interacts with BMPR1A, BMPR1B and BMPR2; the interaction with BMPR1A and BMPR1B is BMP2- and BMP4-dependent. Post-translationally, N-glycosylated. In terms of processing, proteolytic cleavage produces a CUB-containing C-terminal fragment that retains the ability to bind to TGFBR2. This reaction is catalyzed in vitro by MMP2 and, to a lesser extent, by MMP9. In terms of tissue distribution, highly expressed in osteoblasts. In normal lung, mainly expressed in bronchial epithelial cells. Tends to be up-regulated in lung cancer cells.

It is found in the secreted. The protein resides in the cell surface. Its function is as follows. Is a positive regulator of the BMP signaling pathway, required for proper chondrogenesis, osteogenesis and skeletal development. It acts as a coreceptor for BMP ligands, particularly BMP2 and BMP4, facilitating their interactions with BMP type I receptors. It is required for ligand-induced recruitment of BMP receptors to lipid rafts. Binds to TGFBR2 and activates TGFB signaling. In lung cancer cells, could serve as an endogenous autocrine and paracrine ligand of TGFBR2, which could regulate TGFBR2 signaling and hence modulate epithelial-mesenchymal transition and cancer progression. This Homo sapiens (Human) protein is Signal peptide, CUB and EGF-like domain-containing protein 3.